The following is a 240-amino-acid chain: Ribonuclease PH (240 aa).

Residues Arg86 and Gly124–Arg126 contribute to the phosphate site.

The protein belongs to the RNase PH family. Homohexameric ring arranged as a trimer of dimers.

It catalyses the reaction tRNA(n+1) + phosphate = tRNA(n) + a ribonucleoside 5'-diphosphate. Functionally, phosphorolytic 3'-5' exoribonuclease that plays an important role in tRNA 3'-end maturation. Removes nucleotide residues following the 3'-CCA terminus of tRNAs; can also add nucleotides to the ends of RNA molecules by using nucleoside diphosphates as substrates, but this may not be physiologically important. Probably plays a role in initiation of 16S rRNA degradation (leading to ribosome degradation) during starvation. The sequence is that of Ribonuclease PH from Mannheimia succiniciproducens (strain KCTC 0769BP / MBEL55E).